The following is a 365-amino-acid chain: NAD(P)H-quinone oxidoreductase subunit 1, chloroplastic (365 aa).

6 helical membrane passes run 30-50 (LVPI…IVWL), 104-124 (IAVI…HFVL), 129-149 (IGVF…LMSG), 253-273 (FGLF…FVAV), 302-322 (VFGT…FLFI), and 338-358 (LLNL…LLTT).

The protein belongs to the complex I subunit 1 family. In terms of assembly, NDH is composed of at least 16 different subunits, 5 of which are encoded in the nucleus.

It localises to the plastid. It is found in the chloroplast thylakoid membrane. It carries out the reaction a plastoquinone + NADH + (n+1) H(+)(in) = a plastoquinol + NAD(+) + n H(+)(out). It catalyses the reaction a plastoquinone + NADPH + (n+1) H(+)(in) = a plastoquinol + NADP(+) + n H(+)(out). Functionally, NDH shuttles electrons from NAD(P)H:plastoquinone, via FMN and iron-sulfur (Fe-S) centers, to quinones in the photosynthetic chain and possibly in a chloroplast respiratory chain. The immediate electron acceptor for the enzyme in this species is believed to be plastoquinone. Couples the redox reaction to proton translocation, and thus conserves the redox energy in a proton gradient. This Populus trichocarpa (Western balsam poplar) protein is NAD(P)H-quinone oxidoreductase subunit 1, chloroplastic.